A 362-amino-acid chain; its full sequence is H-2 class I histocompatibility antigen, D-K alpha chain (362 aa).

The signal sequence occupies residues 1 to 24; sequence MGAMVPRTLLLLLAAALAPAQTRA. The segment at 25-114 is alpha-1; it reads GPHSLRYFET…LLRYYNQSEG (90 aa). Over 25–306 the chain is Extracellular; it reads GPHSLRYFET…RWEPPPSTDS (282 aa). Residue N110 is glycosylated (N-linked (GlcNAc...) asparagine). The segment at 115 to 206 is alpha-2; the sequence is GSHTIQRLSG…ELGNATLLHT (92 aa). The cysteines at positions 125 and 188 are disulfide-linked. Residues N200 and N280 are each glycosylated (N-linked (GlcNAc...) asparagine). Residues 207–298 form an alpha-3 region; sequence DSPKAHVTHH…GLPEPLTLRW (92 aa). An Ig-like C1-type domain is found at 209–297; sequence PKAHVTHHPR…EGLPEPLTLR (89 aa). C227 and C283 are joined by a disulfide. The interval 299–306 is connecting peptide; that stretch reads EPPPSTDS. Residues 307 to 333 form a helical membrane-spanning segment; that stretch reads YMVIVAVLGVLGAVAIIGAVVAFVMMM. The Cytoplasmic portion of the chain corresponds to 334–362; that stretch reads RRNTGGKGGDYTLTPGSQSSEMSLPDCKA. Residues 340 to 362 are disordered; that stretch reads KGGDYTLTPGSQSSEMSLPDCKA. S353 and S356 each carry phosphoserine.

This sequence belongs to the MHC class I family. Heterodimer of an alpha chain and a beta chain (beta-2-microglobulin). Post-translationally, polyubiquitinated in case of infection by murid herpesvirus 4, by the viral E3 ligase K3 (mK3), leading to target the protein for rapid degradation by the endoplasmic reticulum-associated degradation (ERAD) system. Ubiquitination takes place on lysine, as well as serine and threonine residues present in the cytoplasmic tail. Hydroxylated serine and threonine residues in the cytoplasmic tail are subject to ubiquitination via ester bonds instead of the classical isopeptide linkage. In terms of processing, hydroxylation of residues in the cytoplasmic tail.

It is found in the membrane. Involved in the presentation of foreign antigens to the immune system. This chain is H-2 class I histocompatibility antigen, D-K alpha chain (H2-D1), found in Mus musculus (Mouse).